A 282-amino-acid polypeptide reads, in one-letter code: 2-dehydro-3-deoxyphosphooctonate aldolase (282 aa).

It belongs to the KdsA family.

It is found in the cytoplasm. The catalysed reaction is D-arabinose 5-phosphate + phosphoenolpyruvate + H2O = 3-deoxy-alpha-D-manno-2-octulosonate-8-phosphate + phosphate. The protein operates within carbohydrate biosynthesis; 3-deoxy-D-manno-octulosonate biosynthesis; 3-deoxy-D-manno-octulosonate from D-ribulose 5-phosphate: step 2/3. It functions in the pathway bacterial outer membrane biogenesis; lipopolysaccharide biosynthesis. In Shewanella sp. (strain ANA-3), this protein is 2-dehydro-3-deoxyphosphooctonate aldolase.